A 278-amino-acid chain; its full sequence is Transmembrane protein 45B (278 aa).

Helical transmembrane passes span 7-27 (HALPGSFFLIFGLWWSVKYPL), 49-69 (IIEGAVKALFAVIGILAEQFV), 95-115 (YLFFGVSGIIDMLTYLYFNIV), 117-137 (LGLDRVVLAMAVFVEGFLFYF), 149-169 (IHSLLLFSLFGATISICLEVI), 183-203 (LLILQGTWFWQIGFVLFPPFG), and 215-235 (VMFITMCFCWHYLVALCITAI). Phosphoserine is present on residues Ser-273 and Ser-275.

It belongs to the TMEM45 family.

The protein resides in the endosome membrane. The protein localises to the lysosome membrane. It localises to the golgi apparatus. Its subcellular location is the trans-Golgi network membrane. In terms of biological role, plays a role in innate immunity. This Rattus norvegicus (Rat) protein is Transmembrane protein 45B (Tmem45b).